Here is a 210-residue protein sequence, read N- to C-terminus: 3-hexulose-6-phosphate synthase 3 (210 aa).

Belongs to the HPS/KGPDC family. HPS subfamily.

The catalysed reaction is D-ribulose 5-phosphate + formaldehyde = D-arabino-hex-3-ulose 6-phosphate. It participates in one-carbon metabolism; formaldehyde assimilation via RuMP pathway; D-fructose 6-phosphate from D-ribulose 5-phosphate and formaldehyde: step 1/2. Its function is as follows. Catalyzes the condensation of ribulose 5-phosphate with formaldehyde to form 3-hexulose 6-phosphate. The protein is 3-hexulose-6-phosphate synthase 3 of Staphylococcus saprophyticus subsp. saprophyticus (strain ATCC 15305 / DSM 20229 / NCIMB 8711 / NCTC 7292 / S-41).